We begin with the raw amino-acid sequence, 1401 residues long: Condensin complex subunit 1 (1401 aa).

An interactions with SMC2 and SMC4 region spans residues 1-603; that stretch reads MAPQMYEFHL…TVCKNKPNMS (603 aa). Phosphoserine is present on residues serine 20 and serine 585. Polar residues predominate over residues 576–596; sequence STQEKNPRESTGNMVTGQTVC. Disordered regions lie at residues 576–611, 956–978, and 1303–1401; these read STQE…SRGN, REEQ…TTME, and LEIG…RHRS. The span at 956-971 shows a compositional bias: basic and acidic residues; sequence REEQEHKTKDPKEKNT. The span at 1308–1336 shows a compositional bias: polar residues; sequence AGSQRAPSAKKPSTGSRYQPLASTASDND. Phosphoserine is present on residues serine 1310, serine 1315, and serine 1330. Threonine 1331 carries the phosphothreonine modification. Residue serine 1333 is modified to Phosphoserine. Threonine 1339 carries the post-translational modification Phosphothreonine. Residues 1342 to 1362 carry the Bipartite nuclear localization signal motif; sequence PRRTTRRHPNTQQRASKKKPK. Positions 1345–1362 are enriched in basic residues; it reads TTRRHPNTQQRASKKKPK. 5 positions are modified to phosphoserine: serine 1366, serine 1367, serine 1370, serine 1371, and serine 1376. A compositionally biased stretch (acidic residues) spans 1369-1382; it reads ESSEEDLSAEMTED. Phosphothreonine; by CDK1 occurs at positions 1384 and 1389. Serine 1395 carries the phosphoserine modification.

It belongs to the CND1 (condensin subunit 1) family. In terms of assembly, component of the condensin complex, which contains the SMC2 and SMC4 heterodimer, and three non SMC subunits that probably regulate the complex: NCAPH/BRRN1, NCAPD2/CAPD2 and NCAPG. Interacts with histones H1 and H3. In terms of processing, phosphorylated by CDK1. Its phosphorylation, as well as that of NCAPH and NCAPG subunits, activates the condensin complex and is required for chromosome condensation.

The protein localises to the nucleus. It is found in the cytoplasm. Its subcellular location is the chromosome. Functionally, regulatory subunit of the condensin complex, a complex required for conversion of interphase chromatin into mitotic-like condense chromosomes. The condensin complex probably introduces positive supercoils into relaxed DNA in the presence of type I topoisomerases and converts nicked DNA into positive knotted forms in the presence of type II topoisomerases. May target the condensin complex to DNA via its C-terminal domain. May promote the resolution of double-strand DNA catenanes (intertwines) between sister chromatids. Condensin-mediated compaction likely increases tension in catenated sister chromatids, providing directionality for type II topoisomerase-mediated strand exchanges toward chromatid decatenation. Required for decatenation of non-centromeric ultrafine DNA bridges during anaphase. Early in neurogenesis, may play an essential role to ensure accurate mitotic chromosome condensation in neuron stem cells, ultimately affecting neuron pool and cortex size. The polypeptide is Condensin complex subunit 1 (Homo sapiens (Human)).